A 190-amino-acid chain; its full sequence is Lipid A acyltransferase PagP (190 aa).

Residues Met1–Ala18 form the signal peptide. Residues His60, Asp103, and Ser104 contribute to the active site.

The protein belongs to the lipid A palmitoyltransferase family. Homodimer.

It is found in the cell outer membrane. The catalysed reaction is a lipid A + a 1,2-diacyl-sn-glycero-3-phosphocholine = a hepta-acyl lipid A + a 2-acyl-sn-glycero-3-phosphocholine. It carries out the reaction a lipid IVA + a 1,2-diacyl-sn-glycero-3-phosphocholine = a lipid IVB + a 2-acyl-sn-glycero-3-phosphocholine. It catalyses the reaction a lipid IIA + a 1,2-diacyl-sn-glycero-3-phosphocholine = a lipid IIB + a 2-acyl-sn-glycero-3-phosphocholine. Transfers a fatty acid residue from the sn-1 position of a phospholipid to the N-linked hydroxyfatty acid chain on the proximal unit of lipid A or its precursors. The sequence is that of Lipid A acyltransferase PagP from Legionella pneumophila (strain Paris).